Reading from the N-terminus, the 456-residue chain is MSRAHGSPRSFFPVGNPFRVMFPGGAHLSRKLQELLASYEDALALSLRKLKPEAASDVLTLSWMRLAVDCLSELHTNIANLITDLELPVSDWDDKWVDIYLNSSVKLLDICIALSSELSRLDQGQLLLQYALHVLGSESGVPSQEQLKRAEPSLREWMELVGVRCARLVSCSATLQELAGNLSLMKVKNSAKGKVLMRALYGIESVTVFVCSIFVAVLSGSPKPLVELHVPEKFGWSQAFNDLHTAVSEELTRQLSGGSVAAVKELEEVEACARRLHVLASTSQLEEEAANLANAVSHTEEEVMSDSIAQEGDHHCGLKLADDTTREGGIVISESIAEGGTQEAEMKKDISYEKEVAMVERISYKEHQDSNVKQANGSSDESALVVPERTSVQESKEELLNCISSMSKSAEGLRHGLDSLSKRVGDFFQIVLTGRDALLCNLRISDAASKVAEVSS.

The chain crosses the membrane as a helical span at residues 195 to 217 (VLMRALYGIESVTVFVCSIFVAV). The segment at 368 to 390 (QDSNVKQANGSSDESALVVPERT) is disordered. Positions 371-381 (NVKQANGSSDE) are enriched in polar residues.

This sequence belongs to the ROH1 family.

It is found in the membrane. This is UPF0496 protein 4 from Oryza sativa subsp. japonica (Rice).